The primary structure comprises 373 residues: Dual-specificity RNA methyltransferase RlmN (373 aa).

Glu-94 serves as the catalytic Proton acceptor. Residues 100–339 (EADRATLCVS…VIVRKTRGDD (240 aa)) form the Radical SAM core domain. Cys-107 and Cys-344 are oxidised to a cystine. 3 residues coordinate [4Fe-4S] cluster: Cys-114, Cys-118, and Cys-121. Residues 168–169 (GE), Ser-200, 222–224 (SLH), and Asn-301 each bind S-adenosyl-L-methionine. Cys-344 serves as the catalytic S-methylcysteine intermediate.

Belongs to the radical SAM superfamily. RlmN family. [4Fe-4S] cluster is required as a cofactor.

It is found in the cytoplasm. The catalysed reaction is adenosine(2503) in 23S rRNA + 2 reduced [2Fe-2S]-[ferredoxin] + 2 S-adenosyl-L-methionine = 2-methyladenosine(2503) in 23S rRNA + 5'-deoxyadenosine + L-methionine + 2 oxidized [2Fe-2S]-[ferredoxin] + S-adenosyl-L-homocysteine. The enzyme catalyses adenosine(37) in tRNA + 2 reduced [2Fe-2S]-[ferredoxin] + 2 S-adenosyl-L-methionine = 2-methyladenosine(37) in tRNA + 5'-deoxyadenosine + L-methionine + 2 oxidized [2Fe-2S]-[ferredoxin] + S-adenosyl-L-homocysteine. Specifically methylates position 2 of adenine 2503 in 23S rRNA and position 2 of adenine 37 in tRNAs. m2A2503 modification seems to play a crucial role in the proofreading step occurring at the peptidyl transferase center and thus would serve to optimize ribosomal fidelity. The sequence is that of Dual-specificity RNA methyltransferase RlmN from Tolumonas auensis (strain DSM 9187 / NBRC 110442 / TA 4).